The following is a 489-amino-acid chain: Betaine aldehyde dehydrogenase (489 aa).

2 residues coordinate K(+): Thr26 and Asp93. Residue 150 to 152 (GAW) coordinates NAD(+). The Charge relay system role is filled by Lys162. NAD(+) is bound at residue 176–179 (KPSE). Val180 contacts K(+). 229-232 (GVET) lines the NAD(+) pocket. Leu245 serves as a coordination point for K(+). Residue Glu251 is the Proton acceptor of the active site. Gly253, Cys285, and Glu386 together coordinate NAD(+). The active-site Nucleophile is Cys285. Cys285 is modified (cysteine sulfenic acid (-SOH)). K(+) is bound by residues Lys456 and Gly459. Glu463 serves as the catalytic Charge relay system.

Belongs to the aldehyde dehydrogenase family. In terms of assembly, dimer of dimers. Requires K(+) as cofactor.

The catalysed reaction is betaine aldehyde + NAD(+) + H2O = glycine betaine + NADH + 2 H(+). Its pathway is amine and polyamine biosynthesis; betaine biosynthesis via choline pathway; betaine from betaine aldehyde: step 1/1. In terms of biological role, involved in the biosynthesis of the osmoprotectant glycine betaine. Catalyzes the irreversible oxidation of betaine aldehyde to the corresponding acid. The chain is Betaine aldehyde dehydrogenase from Burkholderia ambifaria (strain ATCC BAA-244 / DSM 16087 / CCUG 44356 / LMG 19182 / AMMD) (Burkholderia cepacia (strain AMMD)).